We begin with the raw amino-acid sequence, 440 residues long: Ribosomal protein uS12 methylthiotransferase RimO (440 aa).

One can recognise an MTTase N-terminal domain in the interval 6 to 116 (PKVGFVSLGC…VVSAVHEVVP (111 aa)). Cys-15, Cys-51, Cys-80, Cys-149, Cys-153, and Cys-156 together coordinate [4Fe-4S] cluster. Residues 135 to 374 (LTPRHYAYLK…AHQQAISSAR (240 aa)) enclose the Radical SAM core domain. The TRAM domain maps to 376–440 (QAKIGLEMDV…DEYDMWGELV (65 aa)).

It belongs to the methylthiotransferase family. RimO subfamily. Requires [4Fe-4S] cluster as cofactor.

Its subcellular location is the cytoplasm. It catalyses the reaction L-aspartate(89)-[ribosomal protein uS12]-hydrogen + (sulfur carrier)-SH + AH2 + 2 S-adenosyl-L-methionine = 3-methylsulfanyl-L-aspartate(89)-[ribosomal protein uS12]-hydrogen + (sulfur carrier)-H + 5'-deoxyadenosine + L-methionine + A + S-adenosyl-L-homocysteine + 2 H(+). Catalyzes the methylthiolation of an aspartic acid residue of ribosomal protein uS12. The polypeptide is Ribosomal protein uS12 methylthiotransferase RimO (Ectopseudomonas mendocina (strain ymp) (Pseudomonas mendocina)).